The sequence spans 258 residues: Exosome complex component Rrp41 (258 aa).

This sequence belongs to the RNase PH family. Rrp41 subfamily. As to quaternary structure, component of the archaeal exosome complex. Forms a hexameric ring-like arrangement composed of 3 Rrp41-Rrp42 heterodimers. The hexameric ring associates with a trimer of Rrp4 and/or Csl4 subunits.

The protein localises to the cytoplasm. Catalytic component of the exosome, which is a complex involved in RNA degradation. Has 3'-&gt;5' exoribonuclease activity. Can also synthesize heteromeric RNA-tails. The polypeptide is Exosome complex component Rrp41 (Archaeoglobus fulgidus (strain ATCC 49558 / DSM 4304 / JCM 9628 / NBRC 100126 / VC-16)).